The primary structure comprises 365 residues: Histidinol-phosphate aminotransferase (365 aa).

Residue Lys223 is modified to N6-(pyridoxal phosphate)lysine.

Belongs to the class-II pyridoxal-phosphate-dependent aminotransferase family. Histidinol-phosphate aminotransferase subfamily. In terms of assembly, homodimer. The cofactor is pyridoxal 5'-phosphate.

It catalyses the reaction L-histidinol phosphate + 2-oxoglutarate = 3-(imidazol-4-yl)-2-oxopropyl phosphate + L-glutamate. Its pathway is amino-acid biosynthesis; L-histidine biosynthesis; L-histidine from 5-phospho-alpha-D-ribose 1-diphosphate: step 7/9. This Brucella abortus (strain 2308) protein is Histidinol-phosphate aminotransferase.